A 495-amino-acid chain; its full sequence is MKSQLLSLAVAVSTISQGVVGQEPFGWPFKPMVTQDDLQNKIKLKDIMAGVEKLQSFSDAHPEKNRVFGGNGHKDTVEWIYNELKATGYYNVKKQEQVHLWSHAEAALSANGKDLKASAMSYSPPANKIMAELVVAKNNGCNATDYPENTQGKIVLIQRGVCSFGEKSSQAGDAKAIGAVVYNNVPGSLAGTLGGLDKRHVPTAGLSQEDGKNLASLVASGKVDVTMNVVSLFENRTTWNVIAETKGGDHNNVVMLGAHSDSVDAGPGINDNGSGSIGIMTVAKALTNFKLNNAVRFAWWTAEEFGLLGSTFYVDSLDDRELHKVKLYLNFDMIGSPNFANQIYDGDGSAYNMTGPAGSAEIEYLFEKFFDDQGLPHQPTAFTGRSDYSAFIKRNVPAGGLFTGAEVVKTPEQVKLFGGEAGVAYDKNYHGKGDTVANINKGAIFLNTRAIAYSVAEYARSLKGFPTRPKTGKRAVNPQYAKMPGGGCGHHTVFM.

A signal peptide spans 1 to 21 (MKSQLLSLAVAVSTISQGVVG). Residues 124–218 (PPANKIMAEL…EDGKNLASLV (95 aa)) enclose the PA domain. 2 N-linked (GlcNAc...) asparagine glycosylation sites follow: N142 and N235. The Zn(2+) site is built by H259 and D271. N272 carries N-linked (GlcNAc...) asparagine glycosylation. The active-site Proton acceptor is E303. The Zn(2+) site is built by E304 and D332. Residue N352 is glycosylated (N-linked (GlcNAc...) asparagine). A Zn(2+)-binding site is contributed by H430.

It belongs to the peptidase M28 family. M28A subfamily. In terms of assembly, monomer. Requires Zn(2+) as cofactor.

The protein localises to the secreted. Extracellular aminopeptidase that releases a wide variety of amino acids from natural peptides and contributes to pathogenicity. The polypeptide is Leucine aminopeptidase 2 (LAP2) (Trichophyton equinum (Horse ringworm fungus)).